A 164-amino-acid chain; its full sequence is Protein-export protein SecB (164 aa).

This sequence belongs to the SecB family. As to quaternary structure, homotetramer, a dimer of dimers. One homotetramer interacts with 1 SecA dimer.

It localises to the cytoplasm. Its function is as follows. One of the proteins required for the normal export of preproteins out of the cell cytoplasm. It is a molecular chaperone that binds to a subset of precursor proteins, maintaining them in a translocation-competent state. It also specifically binds to its receptor SecA. The protein is Protein-export protein SecB of Pseudomonas syringae pv. tomato (strain ATCC BAA-871 / DC3000).